Reading from the N-terminus, the 464-residue chain is 3-isopropylmalate dehydratase large subunit (464 aa).

C337, C397, and C400 together coordinate [4Fe-4S] cluster.

Belongs to the aconitase/IPM isomerase family. LeuC type 1 subfamily. In terms of assembly, heterodimer of LeuC and LeuD. [4Fe-4S] cluster serves as cofactor.

It catalyses the reaction (2R,3S)-3-isopropylmalate = (2S)-2-isopropylmalate. It functions in the pathway amino-acid biosynthesis; L-leucine biosynthesis; L-leucine from 3-methyl-2-oxobutanoate: step 2/4. Its function is as follows. Catalyzes the isomerization between 2-isopropylmalate and 3-isopropylmalate, via the formation of 2-isopropylmaleate. The sequence is that of 3-isopropylmalate dehydratase large subunit from Bacillus mycoides (strain KBAB4) (Bacillus weihenstephanensis).